The following is an 81-amino-acid chain: Cytochrome b559 subunit alpha (81 aa).

The helical transmembrane segment at 21–35 (VIHSITIPSLFVSGW) threads the bilayer. Position 23 (histidine 23) interacts with heme.

The protein belongs to the PsbE/PsbF family. As to quaternary structure, heterodimer of an alpha subunit and a beta subunit. PSII is composed of 1 copy each of membrane proteins PsbA, PsbB, PsbC, PsbD, PsbE, PsbF, PsbH, PsbI, PsbJ, PsbK, PsbL, PsbM, PsbT, PsbX, PsbY, PsbZ, Psb30/Ycf12, at least 3 peripheral proteins of the oxygen-evolving complex and a large number of cofactors. It forms dimeric complexes. It depends on heme b as a cofactor.

It is found in the plastid. The protein localises to the chloroplast thylakoid membrane. In terms of biological role, this b-type cytochrome is tightly associated with the reaction center of photosystem II (PSII). PSII is a light-driven water:plastoquinone oxidoreductase that uses light energy to abstract electrons from H(2)O, generating O(2) and a proton gradient subsequently used for ATP formation. It consists of a core antenna complex that captures photons, and an electron transfer chain that converts photonic excitation into a charge separation. The polypeptide is Cytochrome b559 subunit alpha (Mesostigma viride (Green alga)).